Reading from the N-terminus, the 75-residue chain is Large ribosomal subunit protein bL31 (75 aa).

The protein belongs to the bacterial ribosomal protein bL31 family. Type A subfamily. In terms of assembly, part of the 50S ribosomal subunit.

In terms of biological role, binds the 23S rRNA. This Gluconobacter oxydans (strain 621H) (Gluconobacter suboxydans) protein is Large ribosomal subunit protein bL31.